The chain runs to 316 residues: GTP cyclohydrolase FolE2 1 (316 aa).

The protein belongs to the GTP cyclohydrolase IV family.

The catalysed reaction is GTP + H2O = 7,8-dihydroneopterin 3'-triphosphate + formate + H(+). It participates in cofactor biosynthesis; 7,8-dihydroneopterin triphosphate biosynthesis; 7,8-dihydroneopterin triphosphate from GTP: step 1/1. Its function is as follows. Converts GTP to 7,8-dihydroneopterin triphosphate. The sequence is that of GTP cyclohydrolase FolE2 1 from Burkholderia lata (strain ATCC 17760 / DSM 23089 / LMG 22485 / NCIMB 9086 / R18194 / 383).